Reading from the N-terminus, the 393-residue chain is S-adenosylmethionine synthase 2 (393 aa).

Glu-9 lines the Mg(2+) pocket. ATP is bound at residue His-15. K(+) is bound at residue Glu-43. L-methionine contacts are provided by Glu-56 and Gln-99. ATP-binding positions include 167–169 (DGK), 235–238 (SGRF), Asp-246, 252–253 (RK), Ala-269, Lys-273, and Lys-277. An L-methionine-binding site is contributed by Asp-246. Residue Lys-277 coordinates L-methionine.

This sequence belongs to the AdoMet synthase family. Homotetramer. Mn(2+) is required as a cofactor. Requires Mg(2+) as cofactor. Co(2+) serves as cofactor. It depends on K(+) as a cofactor. In terms of tissue distribution, mostly expressed in roots. Also present in stems and leaves.

The protein resides in the cytoplasm. The catalysed reaction is L-methionine + ATP + H2O = S-adenosyl-L-methionine + phosphate + diphosphate. It participates in amino-acid biosynthesis; S-adenosyl-L-methionine biosynthesis; S-adenosyl-L-methionine from L-methionine: step 1/1. Its function is as follows. Catalyzes the formation of S-adenosylmethionine from methionine and ATP. The reaction comprises two steps that are both catalyzed by the same enzyme: formation of S-adenosylmethionine (AdoMet) and triphosphate, and subsequent hydrolysis of the triphosphate. The sequence is that of S-adenosylmethionine synthase 2 (SAM2) from Solanum lycopersicum (Tomato).